The chain runs to 716 residues: Leucine-rich repeat neuronal protein 1 (716 aa).

The first 25 residues, 1–25 (MARLSTGKAACQVVLGLLITSLTES), serve as a signal peptide directing secretion. The 47-residue stretch at 26–72 (SILTSECPQLCVCEIRPWFTPQSTYREATTVDCNDLRLTRIPGNLSS) folds into the LRRNT domain. The Extracellular portion of the chain corresponds to 26–631 (SILTSECPQL…DISDHETSTA (606 aa)). N69 carries an N-linked (GlcNAc...) asparagine glycan. 9 LRR repeats span residues 73–95 (DTQV…QQLF), 96–117 (NLTE…GLAN), 120–141 (QLTT…CLQD), 144–165 (NLQE…AFSG), 168–189 (NLLR…WFDS), 192–213 (NLEI…NFRP), 216–237 (NLRS…ALVG), 240–261 (SLES…ALQK), and 264–285 (NLKF…DFKN). N96 and N117 each carry an N-linked (GlcNAc...) asparagine glycan. The LRRCT domain maps to 371–424 (NPLRCDCVIHWINSNKTNIRFMEPLSMFCAMPPEYRGQQVKEVLIQDSSEQCLP). N385 is a glycosylation site (N-linked (GlcNAc...) asparagine). The 92-residue stretch at 424–515 (PMISHDTFPN…GADTRVATIK (92 aa)) folds into the Ig-like C2-type domain. An intrachain disulfide couples C447 to C499. N517 carries N-linked (GlcNAc...) asparagine glycosylation. Positions 525–619 (QVLKIYVKQT…VNVTTKTAAF (95 aa)) constitute a Fibronectin type-III domain. The chain crosses the membrane as a helical span at residues 632–652 (LAAVMGSMFAVISLASIAIYI). The Cytoplasmic segment spans residues 653–716 (AKRFKRKNYH…VDTSRSYYMW (64 aa)). Residues 692–716 (SDKDKDGSADTKPTQVDTSRSYYMW) form a disordered region. The span at 702–716 (TKPTQVDTSRSYYMW) shows a compositional bias: polar residues.

In terms of tissue distribution, expressed in brain.

It localises to the membrane. The polypeptide is Leucine-rich repeat neuronal protein 1 (Lrrn1) (Mus musculus (Mouse)).